The following is a 1366-amino-acid chain: DNA-directed RNA polymerase subunit beta'' (1366 aa).

Residues cysteine 220, cysteine 291, cysteine 298, and cysteine 301 each contribute to the Zn(2+) site.

It belongs to the RNA polymerase beta' chain family. RpoC2 subfamily. As to quaternary structure, in plastids the minimal PEP RNA polymerase catalytic core is composed of four subunits: alpha, beta, beta', and beta''. When a (nuclear-encoded) sigma factor is associated with the core the holoenzyme is formed, which can initiate transcription. Requires Zn(2+) as cofactor.

The protein resides in the plastid. Its subcellular location is the chloroplast. It carries out the reaction RNA(n) + a ribonucleoside 5'-triphosphate = RNA(n+1) + diphosphate. Its function is as follows. DNA-dependent RNA polymerase catalyzes the transcription of DNA into RNA using the four ribonucleoside triphosphates as substrates. In Phaseolus vulgaris (Kidney bean), this protein is DNA-directed RNA polymerase subunit beta''.